The sequence spans 359 residues: DNA polymerase IV (359 aa).

The region spanning 4–184 (IVHVDMDAFY…LPVNRIPGVG (181 aa)) is the UmuC domain. Residues Asp-8 and Asp-102 each contribute to the Mg(2+) site. Glu-103 is an active-site residue.

This sequence belongs to the DNA polymerase type-Y family. As to quaternary structure, monomer. Mg(2+) is required as a cofactor.

It localises to the cytoplasm. The enzyme catalyses DNA(n) + a 2'-deoxyribonucleoside 5'-triphosphate = DNA(n+1) + diphosphate. Functionally, poorly processive, error-prone DNA polymerase involved in untargeted mutagenesis. Copies undamaged DNA at stalled replication forks, which arise in vivo from mismatched or misaligned primer ends. These misaligned primers can be extended by PolIV. Exhibits no 3'-5' exonuclease (proofreading) activity. May be involved in translesional synthesis, in conjunction with the beta clamp from PolIII. This is DNA polymerase IV from Xanthomonas campestris pv. campestris (strain 8004).